Consider the following 1772-residue polypeptide: Merozoite surface protein 1 (1772 aa).

A signal peptide spans 1–18; that stretch reads MKVIGLLFSFVFFAIKCK. N-linked (GlcNAc...) asparagine glycosylation is present at Asn-54. The disordered stretch occupies residues 290-319; it reads TGGQSSTEPGSGGSSASGTSSSGQASAGTG. Low complexity predominate over residues 305–319; it reads ASGTSSSGQASAGTG. N-linked (GlcNAc...) asparagine glycosylation is found at Asn-406 and Asn-646. The segment at 703 to 796 is disordered; that stretch reads KERMEQGPAI…QPSQAASSTT (94 aa). The span at 724–796 shows a compositional bias: low complexity; sequence SAESSTDRST…QPSQAASSTT (73 aa). Residue Asn-829 is glycosylated (N-linked (GlcNAc...) asparagine). Residues 924–1070 are disordered; that stretch reads AAPTPVTPAA…SRAESEEDMP (147 aa). Composition is skewed to low complexity over residues 930–946 and 956–1052; these read TPAA…PDVQ and SQQP…NSQS. 2 N-linked (GlcNAc...) asparagine glycosylation sites follow: Asn-1018 and Asn-1090. Residues 1362 to 1383 are disordered; sequence GAVPGSGTDTRVAGSSVDDNED. N-linked (GlcNAc...) asparagine glycans are attached at residues Asn-1408, Asn-1446, Asn-1541, and Asn-1629. EGF-like domains lie at 1661 to 1703 and 1704 to 1752; these read HVCV…VENN and NPTC…FCSS. Cys-1663 and Cys-1675 form a disulfide bridge. Residue Asn-1680 is glycosylated (N-linked (GlcNAc...) asparagine). Intrachain disulfides connect Cys-1687-Cys-1699, Cys-1707-Cys-1720, Cys-1714-Cys-1734, and Cys-1736-Cys-1750. Ser-1751 carries GPI-anchor amidated serine lipidation. Positions 1752–1772 are cleaved as a propeptide — removed in mature form; sequence SSSFMGLSILLIITLIVFNIF.

As to quaternary structure, forms a complex composed of subunits p83, p30, p38, and p42 which remain non-covalently associated; the complex is formed at the merozoite surface prior to egress from host erythrocytes. The p230 precursor is cleaved by SUB1 prior to merozoite egress into 4 subunits p83, p30, p38, and p42 which remain non-covalently associated. In a second processing step during erythrocyte invasion, p42 is cleaved by SUB2 into p33 and p19; the latter remains attached to the merozoite surface via its GPI-anchor and stays on the surface during the subsequent ring stage.

The protein localises to the cell membrane. The protein resides in the secreted. In terms of biological role, during the asexual blood stage, involved in merozoite egress from host erythrocytes possibly via its interaction with the host cytoskeleton protein spectrin resulting in the destabilization of the host cytoskeleton and thus leading to erythrocyte cell membrane rupture. Involved in the binding to host erythrocytes and is required for host erythrocyte invasion. This is Merozoite surface protein 1 from Plasmodium yoelii yoelii.